The following is a 429-amino-acid chain: Enolase (429 aa).

Q163 lines the (2R)-2-phosphoglycerate pocket. E205 serves as the catalytic Proton donor. Mg(2+)-binding residues include D242, E285, and D312. (2R)-2-phosphoglycerate is bound by residues K337, R366, S367, and K388. K337 serves as the catalytic Proton acceptor.

The protein belongs to the enolase family. Mg(2+) is required as a cofactor.

It localises to the cytoplasm. The protein localises to the secreted. It is found in the cell surface. It carries out the reaction (2R)-2-phosphoglycerate = phosphoenolpyruvate + H2O. The protein operates within carbohydrate degradation; glycolysis; pyruvate from D-glyceraldehyde 3-phosphate: step 4/5. In terms of biological role, catalyzes the reversible conversion of 2-phosphoglycerate (2-PG) into phosphoenolpyruvate (PEP). It is essential for the degradation of carbohydrates via glycolysis. This is Enolase from Methylorubrum extorquens (strain CM4 / NCIMB 13688) (Methylobacterium extorquens).